Here is a 1203-residue protein sequence, read N- to C-terminus: ATP-dependent helicase/nuclease subunit A (1203 aa).

In terms of domain architecture, UvrD-like helicase ATP-binding spans 4–472; sequence VKLTPEQNEA…IRLKENFRSR (469 aa). 25–32 provides a ligand contact to ATP; the sequence is ASAGSGKT. The UvrD-like helicase C-terminal domain occupies 503–785; sequence VQGNISDYPV…RVMTFHKSKG (283 aa).

It belongs to the helicase family. AddA subfamily. As to quaternary structure, heterodimer of AddA and AddB/RexB. Mg(2+) is required as a cofactor.

It catalyses the reaction Couples ATP hydrolysis with the unwinding of duplex DNA by translocating in the 3'-5' direction.. It carries out the reaction ATP + H2O = ADP + phosphate + H(+). Its function is as follows. The heterodimer acts as both an ATP-dependent DNA helicase and an ATP-dependent, dual-direction single-stranded exonuclease. Recognizes the chi site generating a DNA molecule suitable for the initiation of homologous recombination. The AddA nuclease domain is required for chi fragment generation; this subunit has the helicase and 3' -&gt; 5' nuclease activities. The protein is ATP-dependent helicase/nuclease subunit A of Lactococcus lactis subsp. cremoris (strain SK11).